The primary structure comprises 197 residues: dITP/XTP pyrophosphatase (197 aa).

A substrate-binding site is contributed by Thr8–Lys13. 2 residues coordinate Mg(2+): Glu40 and Asp69. Residue Asp69 is the Proton acceptor of the active site. Substrate contacts are provided by residues Ser70, Phe154–Asp157, Lys177, and His182–Arg183.

Belongs to the HAM1 NTPase family. Homodimer. The cofactor is Mg(2+).

The enzyme catalyses XTP + H2O = XMP + diphosphate + H(+). It catalyses the reaction dITP + H2O = dIMP + diphosphate + H(+). The catalysed reaction is ITP + H2O = IMP + diphosphate + H(+). In terms of biological role, pyrophosphatase that catalyzes the hydrolysis of nucleoside triphosphates to their monophosphate derivatives, with a high preference for the non-canonical purine nucleotides XTP (xanthosine triphosphate), dITP (deoxyinosine triphosphate) and ITP. Seems to function as a house-cleaning enzyme that removes non-canonical purine nucleotides from the nucleotide pool, thus preventing their incorporation into DNA/RNA and avoiding chromosomal lesions. This Shigella flexneri protein is dITP/XTP pyrophosphatase (rdgB).